Here is an 842-residue protein sequence, read N- to C-terminus: Cullin-8 (842 aa).

Residues 1–50 form a required for interaction with MMS1 region; that stretch reads MINESVSKREGFHESISRETSASNALGLYNKFNDERNPRYRTMIAELHEF. The segment covering 755 to 765 has biased composition (polar residues); the sequence is LQSSNTGGERT. Residues 755-775 form a disordered region; that stretch reads LQSSNTGGERTSSAHHEGSNS. Residue Lys791 forms a Glycyl lysine isopeptide (Lys-Gly) (interchain with G-Cter in NEDD8) linkage.

The protein belongs to the cullin family. In terms of assembly, component of multiple cullin-RING ligases (CRLs) composed of 4 subunits: the RING protein HRT1, the cullin RTT101, a linker protein MMS1, and one of many alternative substrate receptors belonging to a protein family described as DCAF (DDB1- and CUL4-associated factor). Component of a RTT101(MMS1-MMS22) complex with the substrate receptor MMS22. This complex further interacts with RTT107 and CTF4 to form RTT101-MMS1-MMS22-RTT107 and RTT101-MMS1-MMS22-CTF4 complexes respectively. Component of a RTT101(MSS1-CRT10) complex with the substrate receptor CRT10. Component of a RTT101(MSS1-ESC2) complex with the potential substrate receptor ESC2. Component of a RTT101(MSS1-ORC5) complex with the potential substrate receptor ORC5. Interacts (via C-ter) with HRT1; required for ubiquitin-ligase activity. Interacts (via N-ter) with MMS1. Neddylated. HRT1-binding is necessary for RUB1/NEDD8 modification of RTT101. The modification enhances ubiquitin-ligase activity.

The protein resides in the cytoplasm. It localises to the nucleus. It participates in protein modification; protein ubiquitination. Functionally, core component of multiple cullin-RING-based E3 ubiquitin-protein ligase complexes (CRLs), which mediate the ubiquitination of target proteins. As a scaffold protein may contribute to catalysis through positioning of the substrate and the ubiquitin-conjugating enzyme. The CRL associates with CDC34 as the E2 ubiquitin-conjugating enzyme. The functional specificity of the CRL depends on the type of the associated substrate receptor protein. RTT101(MMS1-MMS22) promotes fork progression through damaged DNA or natural pause sites by stabilizing replication proteins like the replication fork-pausing complex (FPC) and leading-strand polymerase at stalled replication forks. RTT101(MMS1-MMS22) ubiquitinates the acetylated histones H3K56ac-H4 at lysine residues H3K121, H3K122 and H3K125. Ubiquitination is required for efficient histone deposition during replication-coupled nucleosome assembly, probably by facilitating the transfer of H3-H4 from ASF1 to other chaperones involved in histone deposition. RTT101(MMS1-CRT10) may regulate nucleotide synthesis through transcriptional regulation of ribonucleotide reductase. RTT101(MMS1) is also involved in the non-functional rRNA decay (NRD) of 25S rRNA through the selective, ubiquitination-dependent degradation of nonfunctional ribosomal particles. Ubiquitinates the FACT (facilitates chromatin transcription) complex subunit SPT16 in an MMS1-independent manner. Involved in regulation of Ty1 transposition and protects the genome from Ty1 integration upstream of tRNA genes. The protein is Cullin-8 (RTT101) of Saccharomyces cerevisiae (strain ATCC 204508 / S288c) (Baker's yeast).